Consider the following 261-residue polypeptide: Phosphatidylglycerol--prolipoprotein diacylglyceryl transferase (261 aa).

Helical transmembrane passes span 17–37 (FGIHWYGLMYLIGFLAFLWLG), 60–80 (ALFYGALGVILGGRLGYALFY), 92–112 (ILFLWQGGMSFHGGFLGVMVA), and 121–141 (GLTFFGIMDFVAPLVPVGLGA). Arg143 provides a ligand contact to a 1,2-diacyl-sn-glycero-3-phospho-(1'-sn-glycerol). 3 consecutive transmembrane segments (helical) span residues 175-195 (PSQLYEFLLEGVALFILLWWY), 203-223 (GSVSALFLIGYGSFRFLVEFT), and 237-257 (LSMGQWLSLPMVIAGVWLLIV).

The protein belongs to the Lgt family.

The protein resides in the cell inner membrane. The catalysed reaction is L-cysteinyl-[prolipoprotein] + a 1,2-diacyl-sn-glycero-3-phospho-(1'-sn-glycerol) = an S-1,2-diacyl-sn-glyceryl-L-cysteinyl-[prolipoprotein] + sn-glycerol 1-phosphate + H(+). The protein operates within protein modification; lipoprotein biosynthesis (diacylglyceryl transfer). In terms of biological role, catalyzes the transfer of the diacylglyceryl group from phosphatidylglycerol to the sulfhydryl group of the N-terminal cysteine of a prolipoprotein, the first step in the formation of mature lipoproteins. This is Phosphatidylglycerol--prolipoprotein diacylglyceryl transferase from Methylobacillus flagellatus (strain ATCC 51484 / DSM 6875 / VKM B-1610 / KT).